Reading from the N-terminus, the 131-residue chain is Fimbrial assembly protein, serogroups C1 and C2 (131 aa).

The polypeptide is Fimbrial assembly protein, serogroups C1 and C2 (fimB) (Dichelobacter nodosus (Bacteroides nodosus)).